Reading from the N-terminus, the 723-residue chain is Bifunctional lysine-specific demethylase and histidyl-hydroxylase NO66 (723 aa).

Disordered regions lie at residues Lys-13 to Ala-34 and Ser-48 to Cys-213. Positions Lys-14–Gln-31 are enriched in basic residues. Over residues Ala-49–Gln-72 the composition is skewed to low complexity. Composition is skewed to acidic residues over residues Glu-88 to Glu-106 and Glu-114 to Glu-129. Residues Asn-133–Pro-155 show a composition bias toward low complexity. Over residues Glu-190–Lys-199 the composition is skewed to basic and acidic residues. Positions Lys-204–Cys-213 are enriched in low complexity. A JmjC domain is found at Asn-379–Val-518. Fe cation contacts are provided by His-419, Asp-421, and His-484.

The protein belongs to the ROX family. NO66 subfamily. Fe(2+) serves as cofactor.

The protein localises to the nucleus. The enzyme catalyses N(6),N(6)-dimethyl-L-lysyl(36)-[histone H3] + 2 2-oxoglutarate + 2 O2 = L-lysyl(36)-[histone H3] + 2 formaldehyde + 2 succinate + 2 CO2. In terms of biological role, oxygenase that can act as both a histone lysine demethylase and a ribosomal histidine hydroxylase. Specifically demethylates 'Lys-4' (H3K4me) and 'Lys-36' (H3K36me) of histone H3, thereby playing a central role in histone code. The protein is Bifunctional lysine-specific demethylase and histidyl-hydroxylase NO66 of Drosophila grimshawi (Hawaiian fruit fly).